We begin with the raw amino-acid sequence, 303 residues long: MNETNMIDEIKRLKKEKNAVILAHNYQIPEIQEIADIVGDSLKLSQEATKTDADIVVLSGVKFMAESVKILSPNKKVLLPAHDAGCPMADMIDVDQLKEFKAEYPNVPVVCYVNSSAEVKAESDICCTSSNAIKVVRSLQSDKVIFVPDQNLAAYIAEQVPEKEIIPWQGFCITHHRVKDLEVDKIRKQMPEAVFLVHPECTPDVVKKADFVGSTSQIIQYAKESNAEKFVIGTEMGVLHKLKKENPTKKFYLLSPGLICFNMKKTTLVNVYEALRDEQHEIIVDEYVREKALKTLNQMLEIK.

Residues histidine 24 and serine 41 each coordinate iminosuccinate. Cysteine 86 contributes to the [4Fe-4S] cluster binding site. Iminosuccinate contacts are provided by residues 112-114 and serine 129; that span reads YVN. Cysteine 172 provides a ligand contact to [4Fe-4S] cluster. Iminosuccinate is bound by residues 198–200 and threonine 215; that span reads HPE. Position 260 (cysteine 260) interacts with [4Fe-4S] cluster.

Belongs to the quinolinate synthase family. Type 2 subfamily. Requires [4Fe-4S] cluster as cofactor.

It localises to the cytoplasm. It catalyses the reaction iminosuccinate + dihydroxyacetone phosphate = quinolinate + phosphate + 2 H2O + H(+). It functions in the pathway cofactor biosynthesis; NAD(+) biosynthesis; quinolinate from iminoaspartate: step 1/1. Catalyzes the condensation of iminoaspartate with dihydroxyacetone phosphate to form quinolinate. The sequence is that of Quinolinate synthase from Alkaliphilus metalliredigens (strain QYMF).